We begin with the raw amino-acid sequence, 90 residues long: MANHSSAKKAARQTVKRTLINKARSSAIKTFIKKVVHEISLGNKENANLALSVAQSKIMQGVKKNIIKLNTASRKISRLSKQIKSLNESK.

This sequence belongs to the bacterial ribosomal protein bS20 family.

Binds directly to 16S ribosomal RNA. The sequence is that of Small ribosomal subunit protein bS20 from Rickettsia akari (strain Hartford).